The sequence spans 178 residues: Large ribosomal subunit protein uL6 (178 aa).

It belongs to the universal ribosomal protein uL6 family. In terms of assembly, part of the 50S ribosomal subunit.

This protein binds to the 23S rRNA, and is important in its secondary structure. It is located near the subunit interface in the base of the L7/L12 stalk, and near the tRNA binding site of the peptidyltransferase center. The polypeptide is Large ribosomal subunit protein uL6 (Staphylococcus aureus (strain Mu3 / ATCC 700698)).